The chain runs to 148 residues: 3-hydroxyacyl-[acyl-carrier-protein] dehydratase FabZ (148 aa).

The active site involves H50.

The protein belongs to the thioester dehydratase family. FabZ subfamily.

Its subcellular location is the cytoplasm. The enzyme catalyses a (3R)-hydroxyacyl-[ACP] = a (2E)-enoyl-[ACP] + H2O. Functionally, involved in unsaturated fatty acids biosynthesis. Catalyzes the dehydration of short chain beta-hydroxyacyl-ACPs and long chain saturated and unsaturated beta-hydroxyacyl-ACPs. The sequence is that of 3-hydroxyacyl-[acyl-carrier-protein] dehydratase FabZ from Lactobacillus helveticus (strain DPC 4571).